A 376-amino-acid chain; its full sequence is Succinyl-diaminopimelate desuccinylase (376 aa).

His66 lines the Zn(2+) pocket. Asp68 is an active-site residue. Asp99 contacts Zn(2+). Glu133 (proton acceptor) is an active-site residue. Glu134, Glu162, and His349 together coordinate Zn(2+).

The protein belongs to the peptidase M20A family. DapE subfamily. Homodimer. The cofactor is Zn(2+). Co(2+) is required as a cofactor.

The enzyme catalyses N-succinyl-(2S,6S)-2,6-diaminopimelate + H2O = (2S,6S)-2,6-diaminopimelate + succinate. The protein operates within amino-acid biosynthesis; L-lysine biosynthesis via DAP pathway; LL-2,6-diaminopimelate from (S)-tetrahydrodipicolinate (succinylase route): step 3/3. Functionally, catalyzes the hydrolysis of N-succinyl-L,L-diaminopimelic acid (SDAP), forming succinate and LL-2,6-diaminopimelate (DAP), an intermediate involved in the bacterial biosynthesis of lysine and meso-diaminopimelic acid, an essential component of bacterial cell walls. In Vesicomyosocius okutanii subsp. Calyptogena okutanii (strain HA), this protein is Succinyl-diaminopimelate desuccinylase.